A 123-amino-acid chain; its full sequence is Holo-[acyl-carrier-protein] synthase (123 aa).

2 residues coordinate Mg(2+): D8 and E60.

Belongs to the P-Pant transferase superfamily. AcpS family. Mg(2+) serves as cofactor.

Its subcellular location is the cytoplasm. It catalyses the reaction apo-[ACP] + CoA = holo-[ACP] + adenosine 3',5'-bisphosphate + H(+). Transfers the 4'-phosphopantetheine moiety from coenzyme A to a Ser of acyl-carrier-protein. In Ehrlichia chaffeensis (strain ATCC CRL-10679 / Arkansas), this protein is Holo-[acyl-carrier-protein] synthase.